Reading from the N-terminus, the 1046-residue chain is Inner tegument protein (1046 aa).

The interaction with large tegument protein stretch occupies residues 543-1046; it reads WGIVPPDESN…TGRRANGDNA (504 aa).

The protein belongs to the herpesviridae inner tegument protein family. As to quaternary structure, interacts (via C-terminus) with the large tegument protein/LTP (via N-terminus).

The protein localises to the virion tegument. It localises to the host cytoplasm. Its subcellular location is the host nucleus. It is found in the host Golgi apparatus. The protein resides in the host trans-Golgi network. Plays an essential role in cytoplasmic secondary envelopment during viral egress. Interacts with the capsid via the large tegument protein/LTP and participates in its transport to the host trans-Golgi network (TGN) where secondary envelopment occurs. Modulates tegumentation and capsid accumulation at the viral assembly complex. The polypeptide is Inner tegument protein (MDV050) (Gallid herpesvirus 2 (strain Chicken/Md5/ATCC VR-987) (GaHV-2)).